A 206-amino-acid polypeptide reads, in one-letter code: Endoribonuclease YbeY (206 aa).

The tract at residues methionine 1–histidine 20 is disordered. Residues histidine 168, histidine 172, and histidine 178 each contribute to the Zn(2+) site.

Belongs to the endoribonuclease YbeY family. Requires Zn(2+) as cofactor.

It is found in the cytoplasm. In terms of biological role, single strand-specific metallo-endoribonuclease involved in late-stage 70S ribosome quality control and in maturation of the 3' terminus of the 16S rRNA. The protein is Endoribonuclease YbeY of Psychrobacter arcticus (strain DSM 17307 / VKM B-2377 / 273-4).